The sequence spans 439 residues: Mitochondrial distribution and morphology protein 12 (439 aa).

One can recognise an SMP-LTD domain in the interval 1–439 (MSIDVNWRSA…VYPSFWTFLI (439 aa)). Acidic residues predominate over residues 70–85 (YEEDDDDHTSDASEEL). 3 disordered regions span residues 70-102 (YEEDDDDHTSDASEELGSEHSSQWNRTHPELNE), 184-274 (SGWS…PPRM), and 353-386 (GSEQQQQQESAGDDHRPQSRPDSSASASQKRHGG). The span at 197–212 (GRSERHAGMKHQRAEP) shows a compositional bias: basic and acidic residues. A compositionally biased stretch (polar residues) spans 215-230 (DTSNSTSRPSTANTLP). Positions 231-240 (SHPSSSSKNS) are enriched in low complexity. Over residues 247–261 (RNDHPSLHAGEHIED) the composition is skewed to basic and acidic residues.

The protein belongs to the MDM12 family. In terms of assembly, component of the ER-mitochondria encounter structure (ERMES) or MDM complex, composed of mmm1, mdm10, mdm12 and mdm34. A mmm1 homodimer associates with one molecule of mdm12 on each side in a pairwise head-to-tail manner, and the SMP-LTD domains of mmm1 and mdm12 generate a continuous hydrophobic tunnel for phospholipid trafficking.

The protein resides in the mitochondrion outer membrane. The protein localises to the endoplasmic reticulum membrane. In terms of biological role, component of the ERMES/MDM complex, which serves as a molecular tether to connect the endoplasmic reticulum (ER) and mitochondria. Components of this complex are involved in the control of mitochondrial shape and protein biogenesis, and function in nonvesicular lipid trafficking between the ER and mitochondria. Mdm12 is required for the interaction of the ER-resident membrane protein mmm1 and the outer mitochondrial membrane-resident beta-barrel protein mdm10. The mdm12-mmm1 subcomplex functions in the major beta-barrel assembly pathway that is responsible for biogenesis of all mitochondrial outer membrane beta-barrel proteins, and acts in a late step after the SAM complex. The mdm10-mdm12-mmm1 subcomplex further acts in the TOM40-specific pathway after the action of the mdm12-mmm1 complex. Essential for establishing and maintaining the structure of mitochondria and maintenance of mtDNA nucleoids. The sequence is that of Mitochondrial distribution and morphology protein 12 from Neosartorya fischeri (strain ATCC 1020 / DSM 3700 / CBS 544.65 / FGSC A1164 / JCM 1740 / NRRL 181 / WB 181) (Aspergillus fischerianus).